Consider the following 150-residue polypeptide: D-aminoacyl-tRNA deacylase (150 aa).

The short motif at 133-134 (GP) is the Gly-cisPro motif, important for rejection of L-amino acids element.

Belongs to the DTD family. Homodimer.

Its subcellular location is the cytoplasm. It catalyses the reaction glycyl-tRNA(Ala) + H2O = tRNA(Ala) + glycine + H(+). The catalysed reaction is a D-aminoacyl-tRNA + H2O = a tRNA + a D-alpha-amino acid + H(+). An aminoacyl-tRNA editing enzyme that deacylates mischarged D-aminoacyl-tRNAs. Also deacylates mischarged glycyl-tRNA(Ala), protecting cells against glycine mischarging by AlaRS. Acts via tRNA-based rather than protein-based catalysis; rejects L-amino acids rather than detecting D-amino acids in the active site. By recycling D-aminoacyl-tRNA to D-amino acids and free tRNA molecules, this enzyme counteracts the toxicity associated with the formation of D-aminoacyl-tRNA entities in vivo and helps enforce protein L-homochirality. The polypeptide is D-aminoacyl-tRNA deacylase (Kocuria rhizophila (strain ATCC 9341 / DSM 348 / NBRC 103217 / DC2201)).